The sequence spans 651 residues: ATP-dependent RNA helicase MRH4, mitochondrial (651 aa).

A mitochondrion-targeting transit peptide spans 1 to 61 (MLRSSLGSVC…SNARQATRRE (61 aa)). Positions 45-56 (SSLSFSTSNARQ) are enriched in polar residues. Residues 45-137 (SSLSFSTSNA…GGKKLGRDGK (93 aa)) are disordered. Basic and acidic residues-rich tracts occupy residues 72-83 (RVGRSTARDGDK) and 124-137 (NGRE…RDGK). Residues 167–200 (DSFDQFDLLPQVKDAVLNEALKGMLDIKPTPVQR) carry the Q motif motif. Residues 210–241 (TTGARSRWRTKSKPADSGSEAASPDAPPPPRE) are disordered. Positions 224 to 233 (ADSGSEAASP) are enriched in low complexity. The region spanning 234-445 (DAPPPPREEF…ASRFPNMRRI (212 aa)) is the Helicase ATP-binding domain. 247–254 (AETGSGKT) contacts ATP. Positions 392-395 (DEAD) match the DEAD box motif. The region spanning 494-651 (PVKGQVDVRR…ESMFMGQALV (158 aa)) is the Helicase C-terminal domain.

Belongs to the DEAD box helicase family. MRH4 subfamily.

It is found in the mitochondrion. The catalysed reaction is ATP + H2O = ADP + phosphate + H(+). Functionally, ATP-binding RNA helicase involved in mitochondrial RNA metabolism. Required for maintenance of mitochondrial DNA. The sequence is that of ATP-dependent RNA helicase MRH4, mitochondrial (MRH4) from Pyricularia oryzae (strain 70-15 / ATCC MYA-4617 / FGSC 8958) (Rice blast fungus).